We begin with the raw amino-acid sequence, 148 residues long: Ubiquitin-conjugating enzyme E2 13 (148 aa).

In terms of domain architecture, UBC core spans alanine 2–valine 148. The active-site Glycyl thioester intermediate is cysteine 86.

This sequence belongs to the ubiquitin-conjugating enzyme family. In terms of assembly, heterodimer with spm2.

The enzyme catalyses S-ubiquitinyl-[E1 ubiquitin-activating enzyme]-L-cysteine + [E2 ubiquitin-conjugating enzyme]-L-cysteine = [E1 ubiquitin-activating enzyme]-L-cysteine + S-ubiquitinyl-[E2 ubiquitin-conjugating enzyme]-L-cysteine.. Its pathway is protein modification; protein ubiquitination. Functionally, has a role in the DNA error-free postreplication repair (PRR) pathway. The ubc13/spm2 heterodimer catalyzes the synthesis of non-canonical poly-ubiquitin chains that are linked through 'Lys-63'. In Schizosaccharomyces pombe (strain 972 / ATCC 24843) (Fission yeast), this protein is Ubiquitin-conjugating enzyme E2 13 (ubc13).